Consider the following 339-residue polypeptide: MAAAVAAAPGALGSLHAGGARLVAACSAWLCPGLRLPGSLAGRRAGPAIWAQGWVPAAGGPAPKRGYSSEMKTEDELRVRHLEEENRGIVVLGINRAYGKNSLSKNLIKMLSKAVDALKSDKKVRTIIIRSEVPGIFCAGADLKERAKMSSSEVGPFVSKIRAVINDIANLPVPTIAAIDGLALGGGLELALACDIRVAASSAKMGLVETKLAIIPGGGGTQRLPRAIGMSLAKELIFSARVLDGKEAKAVGLISHVLEQNQEGDAAYRKALDLAREFLPQGPVAMRVAKLAINQGMEVDLVTGLAIEEACYAQTIPTKDRLEGLLAFKEKRPPRYKGE.

A mitochondrion-targeting transit peptide spans 1 to 67 (MAAAVAAAPG…AGGPAPKRGY (67 aa)). Lysine 100 is modified (N6-acetyllysine; alternate). Lysine 100 is modified (N6-succinyllysine; alternate). Positions 105–119 (KNLIKMLSKAVDALK) are RNA-binding. Position 109 is an N6-succinyllysine (lysine 109). Lysine 113 and lysine 144 each carry N6-acetyllysine; alternate. 2 positions are modified to N6-succinyllysine; alternate: lysine 113 and lysine 144. N6-succinyllysine occurs at positions 148 and 160. Residues lysine 204 and lysine 211 each carry the N6-acetyllysine; alternate modification. 2 positions are modified to N6-succinyllysine; alternate: lysine 204 and lysine 211. Lysine 329 carries the post-translational modification N6-succinyllysine.

Belongs to the enoyl-CoA hydratase/isomerase family. Homohexamer.

Its subcellular location is the mitochondrion. The enzyme catalyses (3S)-3-hydroxy-3-methylglutaryl-CoA = 3-methyl-(2E)-glutaconyl-CoA + H2O. It carries out the reaction (3S)-citramalyl-CoA = itaconyl-CoA + H2O. The catalysed reaction is 3-hydroxyisovaleryl-CoA = 3-methylbut-2-enoyl-CoA + H2O. It catalyses the reaction (S)-3-hydroxyglutaryl-CoA = (2E)-glutaconyl-CoA + H2O. Its pathway is amino-acid degradation; L-leucine degradation; (S)-3-hydroxy-3-methylglutaryl-CoA from 3-isovaleryl-CoA: step 3/3. In terms of biological role, catalyzes the fifth step in the leucine degradation pathway, the reversible hydration of 3-methylglutaconyl-CoA (3-MG-CoA) to 3-hydroxy-3-methylglutaryl-CoA (HMG-CoA). Can catalyze the reverse reaction but at a much lower rate in vitro. HMG-CoA is then quickly degraded by another enzyme (such as HMG-CoA lyase) to give acetyl-CoA and acetoacetate. Uses other substrates such as (2E)-glutaconyl-CoA efficiently in vitro, and to a lesser extent 3-methylcrotonyl-CoA (3-methyl-(2E)-butenoyl-CoA), crotonyl-CoA ((2E)-butenoyl-CoA) and 3-hydroxybutanoyl-CoA (the missing carboxylate reduces affinity to the active site). Originally it was identified as an RNA-binding protein as it binds to AU-rich elements (AREs) in vitro. AREs direct rapid RNA degradation and mRNA deadenylation. Might have itaconyl-CoA hydratase activity, converting itaconyl-CoA into citramalyl-CoA in the C5-dicarboxylate catabolism pathway. The C5-dicarboxylate catabolism pathway is required to detoxify itaconate, an antimicrobial metabolite and immunomodulator produced by macrophages during certain infections, that can act as a vitamin B12-poisoning metabolite. In Homo sapiens (Human), this protein is Methylglutaconyl-CoA hydratase, mitochondrial (AUH).